Reading from the N-terminus, the 266-residue chain is Killer cell lectin-like receptor 3 (266 aa).

Over 1–48 (MSEPEVTYSTVRLHKSSGLQKLVRHEETQGPREVGNRKCSAPWQLIVK) the chain is Cytoplasmic. A helical; Signal-anchor for type II membrane protein transmembrane segment spans residues 49–69 (ALGILCFLLLVTVAVLAVKIF). Residues 70 to 266 (QYNQHKQEIN…CGKKLDKFPD (197 aa)) lie on the Extracellular side of the membrane. Residues Asn-79, Asn-87, Asn-104, and Asn-113 are each glycosylated (N-linked (GlcNAc...) asparagine). Residues 147 to 151 (WFCYS) are involved in dimerization. Cys-149 and Cys-154 are oxidised to a cystine. Residues 150 to 258 (YSTKCYYFIM…CNIPYYCICG (109 aa)) form the C-type lectin domain. Asn-160 carries N-linked (GlcNAc...) asparagine glycosylation. Implicated in MHC class I binding stretches follow at residues 160–162 (NKT), 195–196 (IP), 207–208 (KK), 224–233 (MKIRKMNFKS), and 240–245 (SKARIE). Disulfide bonds link Cys-167–Cys-255, Cys-171–Cys-257, and Cys-236–Cys-249.

In terms of assembly, homodimer; disulfide-linked.

It localises to the membrane. Receptor on natural killer (NK) cells for class I MHC. This Mus musculus (Mouse) protein is Killer cell lectin-like receptor 3 (Klra3).